We begin with the raw amino-acid sequence, 255 residues long: 5'-nucleotidase SurE (255 aa).

Residues Asp8, Asp9, Ser40, and Asn93 each contribute to the a divalent metal cation site.

This sequence belongs to the SurE nucleotidase family. A divalent metal cation serves as cofactor.

It localises to the cytoplasm. The catalysed reaction is a ribonucleoside 5'-phosphate + H2O = a ribonucleoside + phosphate. In terms of biological role, nucleotidase that shows phosphatase activity on nucleoside 5'-monophosphates. The chain is 5'-nucleotidase SurE from Rhodopseudomonas palustris (strain BisB5).